Consider the following 420-residue polypeptide: 3-phosphoshikimate 1-carboxyvinyltransferase (420 aa).

The 3-phosphoshikimate site is built by Lys-20, Ser-21, and Arg-25. Phosphoenolpyruvate is bound at residue Lys-20. The phosphoenolpyruvate site is built by Gly-90 and Arg-118. Residues Ser-159, Ser-160, Gln-161, Ser-187, Asp-303, and Lys-330 each coordinate 3-phosphoshikimate. Phosphoenolpyruvate is bound at residue Gln-161. Catalysis depends on Asp-303, which acts as the Proton acceptor. The phosphoenolpyruvate site is built by Arg-334, Arg-376, and Lys-402.

Belongs to the EPSP synthase family. As to quaternary structure, monomer.

It localises to the cytoplasm. The enzyme catalyses 3-phosphoshikimate + phosphoenolpyruvate = 5-O-(1-carboxyvinyl)-3-phosphoshikimate + phosphate. It functions in the pathway metabolic intermediate biosynthesis; chorismate biosynthesis; chorismate from D-erythrose 4-phosphate and phosphoenolpyruvate: step 6/7. In terms of biological role, catalyzes the transfer of the enolpyruvyl moiety of phosphoenolpyruvate (PEP) to the 5-hydroxyl of shikimate-3-phosphate (S3P) to produce enolpyruvyl shikimate-3-phosphate and inorganic phosphate. The polypeptide is 3-phosphoshikimate 1-carboxyvinyltransferase (Brachyspira hyodysenteriae (strain ATCC 49526 / WA1)).